The primary structure comprises 547 residues: Nitrate transporter 2.1 (547 aa).

12 helical membrane-spanning segments follow: residues 53 to 73 (WICFFMSFVATFAPASLAPII), 86 to 106 (NAGVAAVCGAIAARIFMGIVV), 113 to 133 (YGAAATMLMTAPAVFCMALVT), 143 to 163 (FFIGLSLCMFVCCQFWCGTMF), 173 to 193 (AIAAGWGNMGGGACHFIMPLI), 211 to 231 (AFFVPGGIYILTATLTLLLGI), 262 to 280 (LGNYRSWILALTYGYSFGV), 296 to 316 (FGLNLAVAGALGAIFGLMNLF), 338 to 358 (IWALWIIQTLGGIFCIVLGKV), 366 to 386 (IVIMIVFSIFCQQACGLHFGI), 400 to 420 (GLVGAGGNTGAAITQAIWFAG), and 433 to 453 (GFVYMGIMTIGLTLPLFFIWF).

This sequence belongs to the major facilitator superfamily. Nitrate/nitrite porter (TC 2.A.1.8) family.

The protein resides in the cell membrane. With respect to regulation, nitrite transport mediated by system 1 is very sensitive to inhibition by nitrate. Involved in nitrate transport, but does not seem to be able to mediate transport by its own. Acts as a dual component transporter with NAR2 (system 1). Imports nitrate with high affinity when expressed with NAR2 in a heterologous system (Xenopus oocytes). Involved in a high affinity and a high capacity transport specific for both nitrate and nitrite. This chain is Nitrate transporter 2.1, found in Chlamydomonas reinhardtii (Chlamydomonas smithii).